A 517-amino-acid polypeptide reads, in one-letter code: MVENQGNVEAHGKPKKVILSLSLKESSKINDSQNVSNVSSKEKCETEALLREENKENLSSDSIRQMIFGDEMAGFVDTGEKPPCSYATLIGLAILQSHNKQLTLSGIYTWIRNTFRYYLNHDGGWQNSIRHNLSLNKAFIKVEKPKGKTLKGHYWTIDPDHMQNFVSVRLHRSHSTDSNSKKRPSSKCHEIKPLTTREIPLARKRSRLNSFNSSTSTSGSSSNVAAEVSNDASQPSNQDSSLNSNIVKPPLPPSNVQSNSSSSENVPKPNAETQEDLPTIDAHESSLYENVNDSRLYEVPACRNMALNTGYSDADPGYLRTSFRSNSHNSLPYSANEEEDVLQADFLVSQQSSMVSSYVSSRDPHSMPYYRREPIPLRPSSRFYEYTRPTYGRTDTSCSAPGAFCSTQINSPSSYINYSKCAPSSPTLSLQKHREHVKSLLYVPDLTPSFDGSDPWNPSSQLLSEPLFDQHSFQSSLDDLMSVTCFRDSPELNHESSGYSSAPLMPSNRAFINDFSL.

A DNA-binding region (fork-head) is located at residues 81–172; sequence KPPCSYATLI…QNFVSVRLHR (92 aa). Residues 170-278 form a disordered region; the sequence is LHRSHSTDSN…PNAETQEDLP (109 aa). The span at 209 to 223 shows a compositional bias: low complexity; it reads NSFNSSTSTSGSSSN. Residues 230–246 are compositionally biased toward polar residues; sequence NDASQPSNQDSSLNSNI. Over residues 254–270 the composition is skewed to low complexity; it reads SNVQSNSSSSENVPKPN.

It is found in the nucleus. Functions as a meiosis-specific transcription factor. Binds to the 5'-GTAAAYA-3' consensus sequence of the promoter of the spo6 gene. This is Meiosis-specific transcription factor mei4 (mei4) from Schizosaccharomyces pombe (strain 972 / ATCC 24843) (Fission yeast).